Reading from the N-terminus, the 420-residue chain is Serine hydroxymethyltransferase (420 aa).

Residues L121 and 125 to 127 (GHL) contribute to the (6S)-5,6,7,8-tetrahydrofolate site. The residue at position 230 (K230) is an N6-(pyridoxal phosphate)lysine. Residues E246 and 354–356 (SPF) contribute to the (6S)-5,6,7,8-tetrahydrofolate site.

It belongs to the SHMT family. In terms of assembly, homodimer. Pyridoxal 5'-phosphate serves as cofactor.

The protein resides in the cytoplasm. The catalysed reaction is (6R)-5,10-methylene-5,6,7,8-tetrahydrofolate + glycine + H2O = (6S)-5,6,7,8-tetrahydrofolate + L-serine. Its pathway is one-carbon metabolism; tetrahydrofolate interconversion. It participates in amino-acid biosynthesis; glycine biosynthesis; glycine from L-serine: step 1/1. Its function is as follows. Catalyzes the reversible interconversion of serine and glycine with tetrahydrofolate (THF) serving as the one-carbon carrier. This reaction serves as the major source of one-carbon groups required for the biosynthesis of purines, thymidylate, methionine, and other important biomolecules. Also exhibits THF-independent aldolase activity toward beta-hydroxyamino acids, producing glycine and aldehydes, via a retro-aldol mechanism. The chain is Serine hydroxymethyltransferase from Rickettsia prowazekii (strain Madrid E).